A 783-amino-acid polypeptide reads, in one-letter code: Tricorn protease-interacting factor F2 (783 aa).

Residues glutamate 107 and 236 to 240 (GAMEN) contribute to the substrate site. Histidine 271 is a binding site for Zn(2+). Glutamate 272 acts as the Proton acceptor in catalysis. Positions 275 and 294 each coordinate Zn(2+).

Belongs to the peptidase M1 family. In terms of assembly, monomer. Part of the Tricorn proteolytic complex. Requires Zn(2+) as cofactor.

It localises to the cytoplasm. Functionally, proteases F1, F2 and F3 degrade oligopeptides produced by Tricorn (themselves probably produced by the proteasome), yielding free amino acids. The sequence is that of Tricorn protease-interacting factor F2 (trf2) from Thermoplasma acidophilum (strain ATCC 25905 / DSM 1728 / JCM 9062 / NBRC 15155 / AMRC-C165).